The primary structure comprises 235 residues: U1 small nuclear ribonucleoprotein C (235 aa).

The segment at Tyr4–Glu36 adopts a Matrin-type zinc-finger fold. Residues Gln131–Ser235 are disordered. Residues Asn134 to Asn168 show a composition bias toward low complexity. Residues Met169 to Glu189 are compositionally biased toward basic and acidic residues. A compositionally biased stretch (low complexity) spans Pro192 to Asn203. 2 stretches are compositionally biased toward basic and acidic residues: residues Ser205–Lys217 and Asn225–Ser235.

The protein belongs to the U1 small nuclear ribonucleoprotein C family. U1 snRNP is composed of the 7 core Sm proteins B/B', D1, D2, D3, E, F and G that assemble in a heptameric protein ring on the Sm site of the small nuclear RNA to form the core snRNP, and at least 3 U1 snRNP-specific proteins U1-70K, U1-A and U1-C. U1-C interacts with U1 snRNA and the 5' splice-site region of the pre-mRNA.

Its subcellular location is the nucleus. In terms of biological role, component of the spliceosomal U1 snRNP, which is essential for recognition of the pre-mRNA 5' splice-site and the subsequent assembly of the spliceosome. U1-C is directly involved in initial 5' splice-site recognition for both constitutive and regulated alternative splicing. The interaction with the 5' splice-site seems to precede base-pairing between the pre-mRNA and the U1 snRNA. Stimulates commitment or early (E) complex formation by stabilizing the base pairing of the 5' end of the U1 snRNA and the 5' splice-site region. This chain is U1 small nuclear ribonucleoprotein C, found in Plasmodium falciparum (isolate 3D7).